We begin with the raw amino-acid sequence, 517 residues long: ATP synthase subunit alpha 1 (517 aa).

174 to 181 lines the ATP pocket; sequence GDRQTGKT.

This sequence belongs to the ATPase alpha/beta chains family. In terms of assembly, F-type ATPases have 2 components, CF(1) - the catalytic core - and CF(0) - the membrane proton channel. CF(1) has five subunits: alpha(3), beta(3), gamma(1), delta(1), epsilon(1). CF(0) has three main subunits: a(1), b(2) and c(9-12). The alpha and beta chains form an alternating ring which encloses part of the gamma chain. CF(1) is attached to CF(0) by a central stalk formed by the gamma and epsilon chains, while a peripheral stalk is formed by the delta and b chains.

The protein resides in the cell inner membrane. The catalysed reaction is ATP + H2O + 4 H(+)(in) = ADP + phosphate + 5 H(+)(out). In terms of biological role, produces ATP from ADP in the presence of a proton gradient across the membrane. The alpha chain is a regulatory subunit. This Albidiferax ferrireducens (strain ATCC BAA-621 / DSM 15236 / T118) (Rhodoferax ferrireducens) protein is ATP synthase subunit alpha 1.